We begin with the raw amino-acid sequence, 500 residues long: ATP synthase subunit alpha (500 aa).

Position 169-176 (169-176) interacts with ATP; the sequence is GDRQTGKT.

It belongs to the ATPase alpha/beta chains family. As to quaternary structure, F-type ATPases have 2 components, CF(1) - the catalytic core - and CF(0) - the membrane proton channel. CF(1) has five subunits: alpha(3), beta(3), gamma(1), delta(1), epsilon(1). CF(0) has three main subunits: a(1), b(2) and c(9-12). The alpha and beta chains form an alternating ring which encloses part of the gamma chain. CF(1) is attached to CF(0) by a central stalk formed by the gamma and epsilon chains, while a peripheral stalk is formed by the delta and b chains.

It is found in the cell membrane. It catalyses the reaction ATP + H2O + 4 H(+)(in) = ADP + phosphate + 5 H(+)(out). In terms of biological role, produces ATP from ADP in the presence of a proton gradient across the membrane. The alpha chain is a regulatory subunit. This is ATP synthase subunit alpha from Lactococcus lactis subsp. cremoris (strain MG1363).